Here is a 574-residue protein sequence, read N- to C-terminus: Pyruvate kinase PKLR (574 aa).

Serine 2, serine 19, serine 26, and serine 43 each carry phosphoserine. Residue arginine 116 coordinates substrate. Residues asparagine 118, serine 120, aspartate 156, and threonine 157 each contribute to the K(+) site. Residue 118-121 coordinates ATP; that stretch reads NFSH. ATP-binding residues include arginine 163 and lysine 250. A Phosphoserine modification is found at serine 292. Substrate is bound at residue lysine 313. Glutamate 315 lines the Mn(2+) pocket. 3 residues coordinate substrate: glycine 338, aspartate 339, and threonine 371. Aspartate 339 serves as a coordination point for Mn(2+). Residues 475-480, tryptophan 525, arginine 532, and 559-564 contribute to the beta-D-fructose 1,6-bisphosphate site; these read TKTGRS and RPGSGY.

This sequence belongs to the pyruvate kinase family. In terms of assembly, homotetramer. Mg(2+) serves as cofactor. Requires Mn(2+) as cofactor. The cofactor is K(+).

It catalyses the reaction pyruvate + ATP = phosphoenolpyruvate + ADP + H(+). Its pathway is carbohydrate degradation; glycolysis; pyruvate from D-glyceraldehyde 3-phosphate: step 5/5. Its activity is regulated as follows. Allosterically activated by fructose 1,6-bisphosphate. Functionally, pyruvate kinase that catalyzes the conversion of phosphoenolpyruvate to pyruvate with the synthesis of ATP, and which plays a key role in glycolysis. This is Pyruvate kinase PKLR (Pklr) from Rattus norvegicus (Rat).